The chain runs to 633 residues: Phosphomethylpyrimidine synthase (633 aa).

Substrate contacts are provided by residues Asn245, Met274, Tyr303, His339, 359–361 (SRG), 400–403 (DGLR), and Glu439. Zn(2+) is bound at residue His443. Tyr466 contributes to the substrate binding site. His507 contributes to the Zn(2+) binding site. Cys587, Cys590, and Cys595 together coordinate [4Fe-4S] cluster.

The protein belongs to the ThiC family. In terms of assembly, homodimer. The cofactor is [4Fe-4S] cluster.

It catalyses the reaction 5-amino-1-(5-phospho-beta-D-ribosyl)imidazole + S-adenosyl-L-methionine = 4-amino-2-methyl-5-(phosphooxymethyl)pyrimidine + CO + 5'-deoxyadenosine + formate + L-methionine + 3 H(+). Its pathway is cofactor biosynthesis; thiamine diphosphate biosynthesis. Functionally, catalyzes the synthesis of the hydroxymethylpyrimidine phosphate (HMP-P) moiety of thiamine from aminoimidazole ribotide (AIR) in a radical S-adenosyl-L-methionine (SAM)-dependent reaction. The chain is Phosphomethylpyrimidine synthase from Neisseria meningitidis serogroup C / serotype 2a (strain ATCC 700532 / DSM 15464 / FAM18).